The sequence spans 631 residues: Forkhead box protein O1 (631 aa).

The segment covering 1–11 (MAEAPQPPPPL) has biased composition (pro residues). Disordered regions lie at residues 1–57 (MAEA…PAAG), 90–147 (DIRQ…SRRN), 223–324 (SSWW…MPEQ), and 372–404 (PNSS…PNSE). 2 stretches are compositionally biased toward low complexity: residues 37–48 (NPSSSANSSPAP) and 100–135 (QQQQ…PLGA). The segment at residues 149–243 (WGNLSYADLI…KNGKSPRRRA (95 aa)) is a DNA-binding region (fork-head). Over residues 253-264 (AKSRGRAAKKKA) the composition is skewed to basic residues. Low complexity predominate over residues 265 to 282 (SMQSSQDGSSDSPGSQFS). 2 stretches are compositionally biased toward polar residues: residues 303–315 (RPRT…TISG) and 381–403 (ASMM…SPNS).

Post-translationally, phosphorylated by AKT1; insulin-induced. In terms of processing, IGF1 rapidly induces phosphorylation of Thr-28, Ser-245 and Ser-308. Phosphorylation of Ser-245 decreases DNA-binding activity and promotes the phosphorylation of Thr-28, and Ser-308, which leads to nuclear exclusion and loss of function. Phosphorylation of Ser-318 is independent of IGF1 and leads to reduced function. Localized to the animal hemisphere during early cleavage stages. At early tadpole stages, expressed in the branchial arches, pronephros and liver. Within the head, expressed in the forming thyroid gland and in head mesenchyme anterior to the eyes.

It is found in the cytoplasm. Its subcellular location is the nucleus. Its function is as follows. Transcription factor that regulates metabolic homeostasis in response to oxidative stress. Binds to the consensus sequence 5'-TT[G/A]TTTTG-3' and the related Daf-16 family binding element (DBE) with consensus sequence 5'-TT[G/A]TTTAC-3'. Main regulator of redox balance and osteoblast numbers and controls bone mass. Orchestrates the endocrine function of the skeleton in regulating glucose metabolism. Also acts as a key regulator of chondrogenic commitment of skeletal progenitor cells in response to lipid availability: when lipids levels are low, translocates to the nucleus and promotes expression of sox9, which induces chondrogenic commitment and suppresses fatty acid oxidation. Acts synergistically with atf4 to suppress osteocalcin/bglap activity, increasing glucose levels and triggering glucose intolerance and insulin insensitivity. Also suppresses the transcriptional activity of runx2, an upstream activator of osteocalcin/bglap. May act as a positive regulator of apoptosis in cardiac smooth muscle cells as a result of its transcriptional activation of pro-apoptotic genes. This Xenopus laevis (African clawed frog) protein is Forkhead box protein O1.